We begin with the raw amino-acid sequence, 250 residues long: MSSSDQNPAATPASSGPAEPSPPGRPTAVSSRVLDMGAQLAQALKPVRQMKQHACSFALYAHDLHRQVEVHHFVARLNQDVLQCAVYDSDKPSARLIGVEYIVSDTIFEGLAPDEQRLWHSHAYEVKAGLWTDVGVPEALQSSEMASLARTYGKFWCTWQADRGDALPLGAPALMVSPQAAEPGRVRGELVRGRDERYGIDSSAGGLKAARVEMDEPEWINPNADYWRLHGKGFAVDVVPAEMKRHAPFP.

A disordered region spans residues Met-1 to Val-29. Positions Pro-8–Ala-18 are enriched in low complexity.

Belongs to the OBAP family.

The sequence is that of Oil body-associated protein 2B from Zea mays (Maize).